The primary structure comprises 151 residues: MKQKADNLIAQNKKASHDYFIKETLEAGIALTGTEIKSIRARRINLRDGYVQIINGSAFLENVHISEYKEGNRYNHDPLRSRRLLLHKREIARLAGIQAQQGMAIIPLKVYLKHGFAKVLIGVGQGKKQYDKRQTIKKRDQDREIHRKYGI.

Residues 132–151 (KRQTIKKRDQDREIHRKYGI) are disordered.

It belongs to the SmpB family.

The protein resides in the cytoplasm. In terms of biological role, required for rescue of stalled ribosomes mediated by trans-translation. Binds to transfer-messenger RNA (tmRNA), required for stable association of tmRNA with ribosomes. tmRNA and SmpB together mimic tRNA shape, replacing the anticodon stem-loop with SmpB. tmRNA is encoded by the ssrA gene; the 2 termini fold to resemble tRNA(Ala) and it encodes a 'tag peptide', a short internal open reading frame. During trans-translation Ala-aminoacylated tmRNA acts like a tRNA, entering the A-site of stalled ribosomes, displacing the stalled mRNA. The ribosome then switches to translate the ORF on the tmRNA; the nascent peptide is terminated with the 'tag peptide' encoded by the tmRNA and targeted for degradation. The ribosome is freed to recommence translation, which seems to be the essential function of trans-translation. This Lactobacillus johnsonii (strain CNCM I-12250 / La1 / NCC 533) protein is SsrA-binding protein.